The sequence spans 617 residues: Dihydroxy-acid dehydratase (617 aa).

D81 serves as a coordination point for Mg(2+). C122 is a binding site for [2Fe-2S] cluster. Positions 123 and 124 each coordinate Mg(2+). Residue K124 is modified to N6-carboxylysine. C195 lines the [2Fe-2S] cluster pocket. Residue E492 coordinates Mg(2+). The active-site Proton acceptor is the S518.

The protein belongs to the IlvD/Edd family. Homodimer. [2Fe-2S] cluster serves as cofactor. Mg(2+) is required as a cofactor.

The enzyme catalyses (2R)-2,3-dihydroxy-3-methylbutanoate = 3-methyl-2-oxobutanoate + H2O. It carries out the reaction (2R,3R)-2,3-dihydroxy-3-methylpentanoate = (S)-3-methyl-2-oxopentanoate + H2O. The protein operates within amino-acid biosynthesis; L-isoleucine biosynthesis; L-isoleucine from 2-oxobutanoate: step 3/4. It participates in amino-acid biosynthesis; L-valine biosynthesis; L-valine from pyruvate: step 3/4. Functionally, functions in the biosynthesis of branched-chain amino acids. Catalyzes the dehydration of (2R,3R)-2,3-dihydroxy-3-methylpentanoate (2,3-dihydroxy-3-methylvalerate) into 2-oxo-3-methylpentanoate (2-oxo-3-methylvalerate) and of (2R)-2,3-dihydroxy-3-methylbutanoate (2,3-dihydroxyisovalerate) into 2-oxo-3-methylbutanoate (2-oxoisovalerate), the penultimate precursor to L-isoleucine and L-valine, respectively. The polypeptide is Dihydroxy-acid dehydratase (Azorhizobium caulinodans (strain ATCC 43989 / DSM 5975 / JCM 20966 / LMG 6465 / NBRC 14845 / NCIMB 13405 / ORS 571)).